A 765-amino-acid polypeptide reads, in one-letter code: Probable dehydratase PflD (765 aa).

One can recognise a PFL domain in the interval 3 to 637 (NRISRLKTAL…VVGATPDGRF (635 aa)). The region spanning 645–765 (GGLSPMLGQD…DIIRRTAHQL (121 aa)) is the Glycine radical domain. G741 carries the glycine radical modification.

This sequence belongs to the glycyl radical enzyme (GRE) family.

In terms of biological role, probably shows dehydratase activity. The chain is Probable dehydratase PflD (pflD) from Escherichia coli (strain K12).